A 383-amino-acid polypeptide reads, in one-letter code: E3 ubiquitin-protein ligase Os04g0590900 (383 aa).

A helical transmembrane segment spans residues 53–73 (PVFSPLVIAIIGVLASAFLLV). The tract at residues 105 to 129 (GGAGSGGRHGHGQSRSHESWNVSPP) is disordered. Residues 157–199 (CSVCLGEFSDGESLRLLPRCSHAFHQQCIDTWLKSHSNCPLCR) form an RING-type; atypical zinc finger. Disordered stretches follow at residues 269 to 291 (EANG…SSFD) and 320 to 383 (LLAG…DHPM).

It localises to the membrane. It catalyses the reaction S-ubiquitinyl-[E2 ubiquitin-conjugating enzyme]-L-cysteine + [acceptor protein]-L-lysine = [E2 ubiquitin-conjugating enzyme]-L-cysteine + N(6)-ubiquitinyl-[acceptor protein]-L-lysine.. It functions in the pathway protein modification; protein ubiquitination. Its function is as follows. Possesses E3 ubiquitin-protein ligase in vitro. This Oryza sativa subsp. japonica (Rice) protein is E3 ubiquitin-protein ligase Os04g0590900.